The following is a 211-amino-acid chain: Porin MspA (211 aa).

The signal sequence occupies residues 1–27; the sequence is MKAISRVLIAMVAAIAALFTSTGTSHA.

The protein belongs to the mycobacterial porin (TC 1.B.24) family. As to quaternary structure, forms very stable octamers. Isolated as a 100 kDa complex that can be reduced to monomers upon boiling in 80% dimethyl sulfoxide for 15 minutes. Structures show a goblet with the wide end on the exterior of the outer membrane and a central channel. It is not known if mixed oligomers of MspA with other Msp subunits form in vivo.

Its subcellular location is the cell outer membrane. It is found in the secreted. It localises to the cell wall. Functionally, the major porin in this organism, forms a water-filled channel which favors the permeation of cations, amino acids, iron Fe(3+) and less efficiently phosphate. Does not transport Fe-ExoMS, the predominant siderophore. Plays a role in transport of beta-lactamase and hydrophilic fluoroquinolone antibiotics such as norfloxacin as well as chloramphenicol. There are about 2400 porins in wild-type, 800 in an mspA deletion and 150 in a double mspA-mspC deletion. Different conductance values with maxima at 2.3 and 4.6 nanosiemens might be caused by a simultaneous reconstitution of MspA channels into the membrane or by the existence of different MspA conformations. The protein is Porin MspA (mspA) of Mycolicibacterium smegmatis (strain ATCC 700084 / mc(2)155) (Mycobacterium smegmatis).